The following is a 157-amino-acid chain: Phosphopantetheine adenylyltransferase (157 aa).

Ser-8 lines the substrate pocket. ATP contacts are provided by residues 8–9 (SF) and His-16. Substrate is bound by residues Lys-40, Thr-72, and Arg-86. Residues 87-89 (GLR), Glu-97, and 122-128 (HSFLSSS) each bind ATP.

This sequence belongs to the bacterial CoaD family. In terms of assembly, homohexamer. Mg(2+) serves as cofactor.

The protein localises to the cytoplasm. It catalyses the reaction (R)-4'-phosphopantetheine + ATP + H(+) = 3'-dephospho-CoA + diphosphate. The protein operates within cofactor biosynthesis; coenzyme A biosynthesis; CoA from (R)-pantothenate: step 4/5. Reversibly transfers an adenylyl group from ATP to 4'-phosphopantetheine, yielding dephospho-CoA (dPCoA) and pyrophosphate. This is Phosphopantetheine adenylyltransferase from Prochlorococcus marinus (strain MIT 9313).